A 261-amino-acid chain; its full sequence is Tryptophan synthase alpha chain (261 aa).

Active-site proton acceptor residues include E49 and D60.

Belongs to the TrpA family. In terms of assembly, tetramer of two alpha and two beta chains.

It carries out the reaction (1S,2R)-1-C-(indol-3-yl)glycerol 3-phosphate + L-serine = D-glyceraldehyde 3-phosphate + L-tryptophan + H2O. It participates in amino-acid biosynthesis; L-tryptophan biosynthesis; L-tryptophan from chorismate: step 5/5. In terms of biological role, the alpha subunit is responsible for the aldol cleavage of indoleglycerol phosphate to indole and glyceraldehyde 3-phosphate. The sequence is that of Tryptophan synthase alpha chain from Leifsonia xyli subsp. xyli (strain CTCB07).